A 596-amino-acid polypeptide reads, in one-letter code: Elongation factor 4 (596 aa).

A tr-type G domain is found at 2–184 (KNIRNFAIIA…SIVKYIPPPE (183 aa)). Residues 14–19 (DHGKST) and 131–134 (NKID) contribute to the GTP site.

This sequence belongs to the TRAFAC class translation factor GTPase superfamily. Classic translation factor GTPase family. LepA subfamily.

The protein resides in the cell inner membrane. It catalyses the reaction GTP + H2O = GDP + phosphate + H(+). Functionally, required for accurate and efficient protein synthesis under certain stress conditions. May act as a fidelity factor of the translation reaction, by catalyzing a one-codon backward translocation of tRNAs on improperly translocated ribosomes. Back-translocation proceeds from a post-translocation (POST) complex to a pre-translocation (PRE) complex, thus giving elongation factor G a second chance to translocate the tRNAs correctly. Binds to ribosomes in a GTP-dependent manner. This is Elongation factor 4 from Neorickettsia sennetsu (strain ATCC VR-367 / Miyayama) (Ehrlichia sennetsu).